Consider the following 345-residue polypeptide: Centromere protein L (345 aa).

Phosphoserine occurs at positions 40 and 54.

It belongs to the CENP-L/IML3 family. In terms of assembly, component of the CENPA-CAD complex, composed of CENPI, CENPK, CENPL, CENPO, CENPP, CENPQ, CENPR and CENPS. The CENPA-CAD complex interacts with the CENPA-NAC complex, at least composed of CENPA, CENPC, CENPH, CENPM, CENPN, CENPT and CENPU.

Its subcellular location is the nucleus. The protein resides in the chromosome. It localises to the centromere. Component of the CENPA-CAD (nucleosome distal) complex, a complex recruited to centromeres which is involved in assembly of kinetochore proteins, mitotic progression and chromosome segregation. May be involved in incorporation of newly synthesized CENPA into centromeres via its interaction with the CENPA-NAC complex. The protein is Centromere protein L (Cenpl) of Rattus norvegicus (Rat).